The sequence spans 200 residues: ATP synthase subunit b (200 aa).

Residues 12–32 (ILSGLAVAVAILVPVLALASG) form a helical membrane-spanning segment.

The protein belongs to the ATPase B chain family. As to quaternary structure, F-type ATPases have 2 components, F(1) - the catalytic core - and F(0) - the membrane proton channel. F(1) has five subunits: alpha(3), beta(3), gamma(1), delta(1), epsilon(1). F(0) has three main subunits: a(1), b(2) and c(10-14). The alpha and beta chains form an alternating ring which encloses part of the gamma chain. F(1) is attached to F(0) by a central stalk formed by the gamma and epsilon chains, while a peripheral stalk is formed by the delta and b chains.

The protein resides in the cell inner membrane. Its function is as follows. F(1)F(0) ATP synthase produces ATP from ADP in the presence of a proton or sodium gradient. F-type ATPases consist of two structural domains, F(1) containing the extramembraneous catalytic core and F(0) containing the membrane proton channel, linked together by a central stalk and a peripheral stalk. During catalysis, ATP synthesis in the catalytic domain of F(1) is coupled via a rotary mechanism of the central stalk subunits to proton translocation. Functionally, component of the F(0) channel, it forms part of the peripheral stalk, linking F(1) to F(0). The protein is ATP synthase subunit b of Trichlorobacter lovleyi (strain ATCC BAA-1151 / DSM 17278 / SZ) (Geobacter lovleyi).